The following is a 204-amino-acid chain: Methyl-CpG-binding domain-containing protein 1 (204 aa).

The disordered stretch occupies residues 1–46 (MLPFPAMNLKKSRSENSSVASSGSKIEEQTEKSAEPTTIKVQKKAG). A compositionally biased stretch (polar residues) spans 15–24 (ENSSVASSGS). The span at 25-34 (KIEEQTEKSA) shows a compositional bias: basic and acidic residues. A CW-type zinc finger spans residues 49–104 (GRSIDVFAVQCEKCMKWRKIDTQDEYEDIRSRVQEDPFFCKTKEGVSCEDVGDLNY). Positions 58–96 (QCEKCMKWRKIDTQDEYEDIRSRVQEDPFFCKTKEGVSC) match the MBD-associated domain (MAD) motif. Positions 59, 62, 88, and 96 each coordinate Zn(2+). An MBD domain is found at 110–180 (WVIDKPGLPR…GDFNFTVPKV (71 aa)).

As to expression, mostly expressed in flowers and buds.

It is found in the nucleus. Its function is as follows. Probable transcriptional regulator. The chain is Methyl-CpG-binding domain-containing protein 1 (MBD1) from Arabidopsis thaliana (Mouse-ear cress).